Reading from the N-terminus, the 121-residue chain is Large ribosomal subunit protein eL8 (121 aa).

The protein belongs to the eukaryotic ribosomal protein eL8 family. Part of the 50S ribosomal subunit. Probably part of the RNase P complex.

The protein localises to the cytoplasm. Multifunctional RNA-binding protein that recognizes the K-turn motif in ribosomal RNA, the RNA component of RNase P, box H/ACA, box C/D and box C'/D' sRNAs. In Thermoplasma acidophilum (strain ATCC 25905 / DSM 1728 / JCM 9062 / NBRC 15155 / AMRC-C165), this protein is Large ribosomal subunit protein eL8.